The following is a 489-amino-acid chain: Betaine aldehyde dehydrogenase (489 aa).

Asparagine 93 provides a ligand contact to K(+). 150 to 152 (GAW) contacts NAD(+). Lysine 162 functions as the Charge relay system in the catalytic mechanism. Residue 176-179 (KPSE) participates in NAD(+) binding. Valine 180 is a K(+) binding site. Residue 229-232 (EVGT) coordinates NAD(+). Leucine 245 lines the K(+) pocket. Catalysis depends on glutamate 251, which acts as the Proton acceptor. Residues glycine 253, cysteine 285, and glutamate 386 each contribute to the NAD(+) site. The active-site Nucleophile is the cysteine 285. Cysteine 285 carries the cysteine sulfenic acid (-SOH) modification. K(+) is bound by residues lysine 456 and glycine 459. Glutamate 463 functions as the Charge relay system in the catalytic mechanism.

This sequence belongs to the aldehyde dehydrogenase family. As to quaternary structure, dimer of dimers. K(+) serves as cofactor.

It carries out the reaction betaine aldehyde + NAD(+) + H2O = glycine betaine + NADH + 2 H(+). It functions in the pathway amine and polyamine biosynthesis; betaine biosynthesis via choline pathway; betaine from betaine aldehyde: step 1/1. Functionally, involved in the biosynthesis of the osmoprotectant glycine betaine. Catalyzes the irreversible oxidation of betaine aldehyde to the corresponding acid. This Chromohalobacter salexigens (strain ATCC BAA-138 / DSM 3043 / CIP 106854 / NCIMB 13768 / 1H11) protein is Betaine aldehyde dehydrogenase.